The sequence spans 393 residues: Serine/threonine-protein kinase US3 homolog (393 aa).

The Protein kinase domain maps to 93 to 378 (FVILKTFTPG…AEVLLNHSVF (286 aa)). ATP is bound by residues 99 to 107 (FTPGAEGFA) and Lys122. Residue Asp206 is the Proton acceptor of the active site.

Belongs to the protein kinase superfamily. Ser/Thr protein kinase family. Post-translationally, phosphorylated by ORF47; this phosphorylation regulates subsequent phosphorylation of proteins 24 and 27 by ORF66. Autophosphorylated.

Its subcellular location is the host cytoplasm. It is found in the host nucleus. It carries out the reaction L-seryl-[protein] + ATP = O-phospho-L-seryl-[protein] + ADP + H(+). It catalyses the reaction L-threonyl-[protein] + ATP = O-phospho-L-threonyl-[protein] + ADP + H(+). Multifunctional serine/threonine kinase that plays a role in several processes including egress of virus particles from the nucleus, modulation of the actin cytoskeleton and inhibition of apoptosis. Phosphorylates proteins 24 and 27, two critical regulators of capsid budding from nucleus to endoplasmic reticulum, thereby facilitating virion egress. Modulates and redistributes host components of the nuclear envelope, including LMNA, emerin/EMD and the nuclear matrix protein MATR3. Phosphorylates envelope glycoprotein B (gB), probably to direct it to the cell surface. Promotes virus intracellular spread by restructuring host cell cytoskeleton. Blocks host apoptosis to extend cell survival and allow efficient viral replication. Promotes viral gene expression by phosphorylating host HDAC2 to reduce viral genome silencing. Down-regulates class I major histocompatibility complex (MHC-I) surface expression. Additionally, phosphorylates IE62 and targets it to the cytoplasm. The nuclear exclusion of IE62 enables the packaging of abundant levels of IE62 into virions. The chain is Serine/threonine-protein kinase US3 homolog (66) from Varicella-zoster virus (strain Dumas) (HHV-3).